Here is an 883-residue protein sequence, read N- to C-terminus: Phosphoenolpyruvate carboxylase (883 aa).

Active-site residues include H138 and K546.

Belongs to the PEPCase type 1 family. Requires Mg(2+) as cofactor.

It catalyses the reaction oxaloacetate + phosphate = phosphoenolpyruvate + hydrogencarbonate. Its function is as follows. Forms oxaloacetate, a four-carbon dicarboxylic acid source for the tricarboxylic acid cycle. The sequence is that of Phosphoenolpyruvate carboxylase from Escherichia coli O81 (strain ED1a).